Reading from the N-terminus, the 116-residue chain is Protein Rev (116 aa).

Phosphoserine; by host CK2 is present on residues serine 5 and serine 8. Residues leucine 18–asparagine 26 are homomultimerization. The interval tyrosine 23 to arginine 48 is disordered. The Nuclear localization signal and RNA-binding (RRE) signature appears at threonine 34–arginine 50. The segment covering glutamine 36–glutamate 47 has biased composition (basic residues). A Nuclear export signal and binding to XPO1 motif is present at residues leucine 73 to aspartate 84. Phosphoserine; by host is present on residues serine 92 and serine 99. Residues serine 92–glutamate 116 form a disordered region.

Belongs to the HIV-1 REV protein family. Homomultimer; when bound to the RRE. Multimeric assembly is essential for activity and may involve XPO1. Binds to human KPNB1, XPO1, TNPO1, RANBP5 and IPO7. Interacts with the viral Integrase. Interacts with human KHDRBS1. Interacts with human NAP1; this interaction decreases Rev multimerization and stimulates its activity. Interacts with human DEAD-box helicases DDX3 and DDX24; these interactions may serve for viral RNA export to the cytoplasm and packaging, respectively. Interacts with human PSIP1; this interaction may inhibit HIV-1 DNA integration by promoting dissociation of the Integrase-LEDGF/p75 complex. In terms of processing, asymmetrically arginine dimethylated at one site by host PRMT6. Methylation impairs the RNA-binding activity and export of viral RNA from the nucleus to the cytoplasm. Phosphorylated by protein kinase CK2. Presence of, and maybe binding to the N-terminus of the regulatory beta subunit of CK2 is necessary for CK2-mediated Rev's phosphorylation.

Its subcellular location is the host nucleus. It is found in the host nucleolus. The protein resides in the host cytoplasm. Escorts unspliced or incompletely spliced viral pre-mRNAs (late transcripts) out of the nucleus of infected cells. These pre-mRNAs carry a recognition sequence called Rev responsive element (RRE) located in the env gene, that is not present in fully spliced viral mRNAs (early transcripts). This function is essential since most viral proteins are translated from unspliced or partially spliced pre-mRNAs which cannot exit the nucleus by the pathway used by fully processed cellular mRNAs. Rev itself is translated from a fully spliced mRNA that readily exits the nucleus. Rev's nuclear localization signal (NLS) binds directly to KPNB1/Importin beta-1 without previous binding to KPNA1/Importin alpha-1. KPNB1 binds to the GDP bound form of RAN (Ran-GDP) and targets Rev to the nucleus. In the nucleus, the conversion from Ran-GDP to Ran-GTP dissociates Rev from KPNB1 and allows Rev's binding to the RRE in viral pre-mRNAs. Rev multimerization on the RRE via cooperative assembly exposes its nuclear export signal (NES) to the surface. Rev can then form a complex with XPO1/CRM1 and Ran-GTP, leading to nuclear export of the complex. Conversion from Ran-GTP to Ran-GDP mediates dissociation of the Rev/RRE/XPO1/RAN complex, so that Rev can return to the nucleus for a subsequent round of export. Beside KPNB1, also seems to interact with TNPO1/Transportin-1, RANBP5/IPO5 and IPO7/RANBP7 for nuclear import. The nucleoporin-like HRB/RIP is an essential cofactor that probably indirectly interacts with Rev to release HIV RNAs from the perinuclear region to the cytoplasm. The polypeptide is Protein Rev (Human immunodeficiency virus type 1 group M subtype B (isolate SC) (HIV-1)).